A 176-amino-acid polypeptide reads, in one-letter code: Membrane glycoprotein UL144 (176 aa).

A signal peptide spans 1–20 (MKPLIMLICFAVILLQLGVT). TNFR-Cys repeat units lie at residues 22–56 (VCQH…SVTC) and 58–95 (PCPN…NTVC). 6 disulfide bridges follow: cysteine 23/cysteine 34, cysteine 35/cysteine 48, cysteine 38/cysteine 56, cysteine 59/cysteine 71, cysteine 74/cysteine 87, and cysteine 77/cysteine 95. The chain crosses the membrane as a helical span at residues 134–154 (LAWLSLFIFLVGIILLILYLI).

In terms of assembly, interacts with host TRIM23; this interaction causes auto-ubiquitination of TRAF6, leading to NF-kappaB activation.

Its subcellular location is the membrane. Functionally, activates NF-kappaB in a tumor necrosis factor receptor (TNFR)-associated factor 6 (TRAF6)-dependent manner, causing the up-regulation of the chemokine CCL22. In Homo sapiens (Human), this protein is Membrane glycoprotein UL144 (UL144).